The following is a 487-amino-acid chain: MPN domain-containing protein (487 aa).

The interval 1-55 is disordered; it reads MAAPESLSPGATAEEAPEEDEDDAEAEDPERGTGSGGRSGSLGGSGGGTAGPGMA. Residue Ala-2 is modified to N-acetylalanine. Ser-8 carries the post-translational modification Phosphoserine. Over residues 15-28 the composition is skewed to acidic residues; the sequence is EAPEEDEDDAEAED. Gly residues predominate over residues 33-55; sequence TGSGGRSGSLGGSGGGTAGPGMA. Residues 61 to 156 enclose the RAMA domain; it reads TRRAVTLRVL…KYKAAWLRRH (96 aa). Ser-113, Ser-115, and Trp-135 together coordinate DNA. The tract at residues 163-217 is disordered; sequence ATADESPTSEGEEEELLLEEEEEDVLAGVSSEDKGHRPPGKGSLEPEATPPGKRM. Residues Ser-168 and Ser-171 each carry the phosphoserine modification. Positions 172 to 187 are enriched in acidic residues; it reads EGEEEELLLEEEEEDV. The MPN domain occupies 258-393; that stretch reads VAVSSNVLFL…PESKICPFWV (136 aa). Zn(2+)-binding residues include His-335, His-337, and Asp-348. The short motif at 335-348 is the JAMM motif element; it reads HSHPHSPAVPSLQD.

This sequence belongs to the peptidase M67 family. As to quaternary structure, monomer. Mainly monomoric, but when binds to dsDNA, forms homotetramer assembled into two homodimers. May interact with histones; this interaction is facilitated by. Degraded following binding to N(6)-methyladenosine methylated DNA (m6A).

Functionally, probable protease. Acts as a sensor of N(6)-methyladenosine methylation on DNA (m6A): recognizes and binds m6A DNA, leading to its degradation. Binds only double strand DNA (dsDNA) in a sequence-independent manner. The polypeptide is MPN domain-containing protein (Mus musculus (Mouse)).